The following is a 549-amino-acid chain: Hydroxylamine reductase (549 aa).

[4Fe-4S] cluster is bound by residues cysteine 5, cysteine 8, cysteine 17, and cysteine 23. Histidine 244, glutamate 268, cysteine 312, cysteine 403, cysteine 431, cysteine 456, glutamate 491, and lysine 493 together coordinate hybrid [4Fe-2O-2S] cluster. Cysteine 403 is modified (cysteine persulfide).

Belongs to the HCP family. It depends on [4Fe-4S] cluster as a cofactor. Hybrid [4Fe-2O-2S] cluster is required as a cofactor.

It localises to the cytoplasm. It carries out the reaction A + NH4(+) + H2O = hydroxylamine + AH2 + H(+). Its function is as follows. Catalyzes the reduction of hydroxylamine to form NH(3) and H(2)O. The sequence is that of Hydroxylamine reductase from Caldanaerobacter subterraneus subsp. tengcongensis (strain DSM 15242 / JCM 11007 / NBRC 100824 / MB4) (Thermoanaerobacter tengcongensis).